A 266-amino-acid chain; its full sequence is Streptomycin 3''-kinase (266 aa).

The Proton acceptor role is filled by aspartate 154.

This sequence belongs to the aminoglycoside phosphotransferase family.

The catalysed reaction is streptomycin + ATP = streptomycin 3''-phosphate + ADP + H(+). Functionally, the aminoglycoside phosphotransferases achieve inactivation of their antibiotic substrates by phosphorylation. The protein is Streptomycin 3''-kinase (str) of Klebsiella pneumoniae.